The chain runs to 964 residues: A-type ATP synthase subunit A (964 aa).

The region spanning 392–518 (FLGYLMANGT…LSYLFAKLGI (127 aa)) is the DOD-type homing endonuclease domain.

The protein belongs to the ATPase alpha/beta chains family. As to quaternary structure, has multiple subunits with at least A(3), B(3), C, D, E, F, H, I and proteolipid K(x). This protein undergoes a protein self splicing that involves a post-translational excision of the VDE intervening region (intein) followed by peptide ligation.

It localises to the cell membrane. It catalyses the reaction ATP + H2O + 4 H(+)(in) = ADP + phosphate + 5 H(+)(out). Functionally, component of the A-type ATP synthase that produces ATP from ADP in the presence of a proton gradient across the membrane. The A chain is the catalytic subunit. This Pyrococcus horikoshii (strain ATCC 700860 / DSM 12428 / JCM 9974 / NBRC 100139 / OT-3) protein is A-type ATP synthase subunit A.